The chain runs to 778 residues: High affinity nerve growth factor receptor (778 aa).

An N-terminal signal peptide occupies residues 1–14 (WGCLRLPLPLCHAL). Residues 15–400 (AAHCRCPASH…VETADEHTFG (386 aa)) are Extracellular-facing. Residues Cys-18 and Cys-20 are joined by a disulfide bond. LRR repeat units follow at residues 71-92 (DLRH…AFQD) and 95-116 (RLSH…TFQH). Asn-100, Asn-130, Asn-143, Asn-151, Asn-194, Asn-234, Asn-262, Asn-300, Asn-320, Asn-340, and Asn-384 each carry an N-linked (GlcNAc...) asparagine glycan. Residues 127–175 (NPFNCSCGIRWLQLWQNGSRAELGNQSLLCWEGSMLVALDSHPLHDCEP) enclose the LRRCT domain. Cys-133 and Cys-173 are disulfide-bonded. Ig-like C2-type domains are found at residues 175 to 262 (PPTA…VMLN) and 281 to 347 (WCIP…VVQN). A disulfide bridge links Cys-282 with Cys-327. Residues 401–421 (VSVAVALAVFASLFLSVMLIA) form a helical membrane-spanning segment. Residues 422-778 (LNKCGHRSKF…TPPIYLDILG (357 aa)) are Cytoplasmic-facing. Tyr-479 carries the phosphotyrosine; by autocatalysis modification. One can recognise a Protein kinase domain in the interval 493–763 (IVLKWELGEG…RSIQDIHSRL (271 aa)). ATP contacts are provided by residues 499-507 (LGEGAFGKV) and Lys-527. The active-site Proton acceptor is Asp-633. A phosphotyrosine; by autocatalysis mark is found at Tyr-659, Tyr-663, Tyr-664, and Tyr-773.

Belongs to the protein kinase superfamily. Tyr protein kinase family. Insulin receptor subfamily. Exists in a dynamic equilibrium between monomeric (low affinity) and dimeric (high affinity) structures. Homodimerization is induced by NGF dimer binding. Interacts with PTPRS. In terms of processing, ligand-mediated auto-phosphorylation. Ubiquitinated. Undergoes polyubiquitination upon activation; regulated by NGFR. Ubiquitination regulates the internalization of the receptor.

Its subcellular location is the cell membrane. It is found in the early endosome membrane. The protein localises to the late endosome membrane. The protein resides in the recycling endosome membrane. The catalysed reaction is L-tyrosyl-[protein] + ATP = O-phospho-L-tyrosyl-[protein] + ADP + H(+). Its activity is regulated as follows. The pro-survival signaling effect of NTRK1 in neurons requires its endocytosis into signaling early endosomes and its retrograde axonal transport. Functionally, receptor tyrosine kinase involved in the development and the maturation of the central and peripheral nervous systems through regulation of proliferation, differentiation and survival of sympathetic and nervous neurons. High affinity receptor for NGF which is its primary ligand, it can also bind and be activated by NTF3/neurotrophin-3. Upon dimeric NGF ligand-binding, undergoes homodimerization, autophosphorylation and activation. Recruits, phosphorylates and/or activates several downstream effectors that regulate distinct overlapping signaling cascades driving cell survival and differentiation. In absence of ligand and activation, may promote cell death, making the survival of neurons dependent on trophic factors. In Gallus gallus (Chicken), this protein is High affinity nerve growth factor receptor (NTRK1).